A 469-amino-acid polypeptide reads, in one-letter code: Tubulin gamma-2 chain (469 aa).

142-148 contributes to the GTP binding site; it reads AGGTGSG.

It belongs to the tubulin family.

It is found in the cytoplasm. The protein localises to the cytoskeleton. The protein resides in the microtubule organizing center. Tubulin is the major constituent of microtubules. The gamma chain is found at microtubule organizing centers (MTOC) such as the spindle poles, suggesting that it is involved in the minus-end nucleation of microtubule assembly. The polypeptide is Tubulin gamma-2 chain (TUBG2) (Oryza sativa subsp. japonica (Rice)).